Consider the following 216-residue polypeptide: N-(5'-phosphoribosyl)anthranilate isomerase (216 aa).

This sequence belongs to the TrpF family.

The catalysed reaction is N-(5-phospho-beta-D-ribosyl)anthranilate = 1-(2-carboxyphenylamino)-1-deoxy-D-ribulose 5-phosphate. Its pathway is amino-acid biosynthesis; L-tryptophan biosynthesis; L-tryptophan from chorismate: step 3/5. This Methanopyrus kandleri (strain AV19 / DSM 6324 / JCM 9639 / NBRC 100938) protein is N-(5'-phosphoribosyl)anthranilate isomerase.